The sequence spans 456 residues: tRNA modification GTPase MnmE (456 aa).

Residues Arg24, Glu81, and Lys120 each coordinate (6S)-5-formyl-5,6,7,8-tetrahydrofolate. The region spanning 216-379 is the TrmE-type G domain; sequence GMTVVIAGRP…LRDHLKACMG (164 aa). Asn226 is a K(+) binding site. GTP-binding positions include 226–231, 245–251, 270–273, 335–338, and 359–361; these read NAGKSS, TDIAGTT, DTAG, NKAD, and SAR. Ser230 is a binding site for Mg(2+). K(+) is bound by residues Thr245, Ile247, and Thr250. Position 251 (Thr251) interacts with Mg(2+). Lys456 contributes to the (6S)-5-formyl-5,6,7,8-tetrahydrofolate binding site.

This sequence belongs to the TRAFAC class TrmE-Era-EngA-EngB-Septin-like GTPase superfamily. TrmE GTPase family. As to quaternary structure, homodimer. Heterotetramer of two MnmE and two MnmG subunits. K(+) is required as a cofactor.

Its subcellular location is the cytoplasm. Exhibits a very high intrinsic GTPase hydrolysis rate. Involved in the addition of a carboxymethylaminomethyl (cmnm) group at the wobble position (U34) of certain tRNAs, forming tRNA-cmnm(5)s(2)U34. This Pseudomonas entomophila (strain L48) protein is tRNA modification GTPase MnmE.